The sequence spans 494 residues: Aspartyl/glutamyl-tRNA(Asn/Gln) amidotransferase subunit B (494 aa).

The protein belongs to the GatB/GatE family. GatB subfamily. As to quaternary structure, heterotrimer of A, B and C subunits.

The enzyme catalyses L-glutamyl-tRNA(Gln) + L-glutamine + ATP + H2O = L-glutaminyl-tRNA(Gln) + L-glutamate + ADP + phosphate + H(+). It catalyses the reaction L-aspartyl-tRNA(Asn) + L-glutamine + ATP + H2O = L-asparaginyl-tRNA(Asn) + L-glutamate + ADP + phosphate + 2 H(+). Functionally, allows the formation of correctly charged Asn-tRNA(Asn) or Gln-tRNA(Gln) through the transamidation of misacylated Asp-tRNA(Asn) or Glu-tRNA(Gln) in organisms which lack either or both of asparaginyl-tRNA or glutaminyl-tRNA synthetases. The reaction takes place in the presence of glutamine and ATP through an activated phospho-Asp-tRNA(Asn) or phospho-Glu-tRNA(Gln). In Rhodopseudomonas palustris (strain ATCC BAA-98 / CGA009), this protein is Aspartyl/glutamyl-tRNA(Asn/Gln) amidotransferase subunit B.